Reading from the N-terminus, the 619-residue chain is Long-chain fatty acid transport protein 6 (619 aa).

2 consecutive transmembrane segments (helical) span residues 22-42 (LLFPYFWDDFWFVLKVVLIII) and 119-139 (VHVWFGLAKLGCVVAFLNTNI). 221–232 (YIFTSGTTGLPK) provides a ligand contact to AMP.

This sequence belongs to the ATP-dependent AMP-binding enzyme family. In terms of tissue distribution, strongly expressed in heart and localizes to cardiac myocytes. Expressed at moderate levels in placenta, testis, and adrenal glands. Expressed at very low levels in kidney, bladder and uterus.

The protein localises to the cell membrane. The protein resides in the sarcolemma. It catalyses the reaction a fatty acid(in) = a fatty acid(out). The enzyme catalyses hexadecanoate(out) = hexadecanoate(in). It carries out the reaction (9Z)-octadecenoate(out) = (9Z)-octadecenoate(in). The catalysed reaction is (9Z,12Z)-octadecadienoate(out) = (9Z,12Z)-octadecadienoate(in). It catalyses the reaction a very long-chain fatty acid + ATP + CoA = a very long-chain fatty acyl-CoA + AMP + diphosphate. The enzyme catalyses tetracosanoate + ATP + CoA = tetracosanoyl-CoA + AMP + diphosphate. It carries out the reaction a long-chain fatty acid + ATP + CoA = a long-chain fatty acyl-CoA + AMP + diphosphate. The catalysed reaction is (5Z,8Z,11Z,14Z)-eicosatetraenoate + ATP + CoA = (5Z,8Z,11Z,14Z)-eicosatetraenoyl-CoA + AMP + diphosphate. It catalyses the reaction (9Z)-octadecenoate + ATP + CoA = (9Z)-octadecenoyl-CoA + AMP + diphosphate. In terms of biological role, mediates the import of long-chain fatty acids (LCFA) into the cell by facilitating their transport at the plasma membrane. Also functions as an acyl-CoA ligase catalyzing the ATP-dependent formation of fatty acyl-CoA using LCFA and very-long-chain fatty acids (VLCFA) as substrates. Plays a pivotal role in regulating available LCFA substrates from exogenous sources in tissues undergoing high levels of beta-oxidation such as the heart. The sequence is that of Long-chain fatty acid transport protein 6 (SLC27A6) from Homo sapiens (Human).